The following is a 33-amino-acid chain: Toxin BcV (33 aa).

A disulfide bridge connects residues Cys-6 and Cys-30.

The protein localises to the secreted. The protein resides in the nematocyst. Its function is as follows. Potently and reversibly blocks mammalian Kv11/KCNH/ERG voltage-gated potassium channels. Acts as a gating-modifier toxin that shifts the voltage-dependence of ERG activation in the positive direction and suppresses its current amplitudes elicited by strong depolarizing pulses that maximally activate the channels. This is Toxin BcV from Bunodosoma caissarum (Sea anemone).